A 126-amino-acid polypeptide reads, in one-letter code: Fumarate reductase subunit C (126 aa).

A run of 3 helical transmembrane segments spans residues 30-50 (IFVA…GAGG), 64-84 (VVVV…VTWF), and 105-125 (VLAG…WMVL).

It belongs to the FrdC family. In terms of assembly, part of an enzyme complex containing four subunits: a flavoprotein (FrdA), an iron-sulfur protein (FrdB), and two hydrophobic anchor proteins (FrdC and FrdD).

The protein resides in the cell membrane. Anchors the catalytic components of the fumarate reductase complex to the cell membrane, binds quinones. The sequence is that of Fumarate reductase subunit C from Mycobacterium tuberculosis (strain ATCC 25177 / H37Ra).